An 880-amino-acid chain; its full sequence is Lon protease (880 aa).

The segment at 1–37 (MADYNDKNYLLHMSGPDSDTGPGIENEDPRAVENPGH) is disordered. Residues 27–37 (EDPRAVENPGH) are compositionally biased toward basic and acidic residues. Residues 57-251 (LPILPVRDVV…LVNTQLQREV (195 aa)) enclose the Lon N-terminal domain. 404–411 (GPPGVGKT) provides a ligand contact to ATP. The 182-residue stretch at 640–821 (KLMPGMALGL…DELLPLVFEG (182 aa)) folds into the Lon proteolytic domain. Residues serine 727 and lysine 770 contribute to the active site. Over residues 826 to 836 (GGVSGAGQAGD) the composition is skewed to gly residues. The tract at residues 826-880 (GGVSGAGQAGDKGGKSKAAAGKKDVVAARPAKPAAPARRRKDKTEDELPTAEAGA) is disordered. Low complexity predominate over residues 852–861 (AARPAKPAAP).

The protein belongs to the peptidase S16 family. As to quaternary structure, homohexamer. Organized in a ring with a central cavity.

The protein localises to the cytoplasm. The catalysed reaction is Hydrolysis of proteins in presence of ATP.. Functionally, ATP-dependent serine protease that mediates the selective degradation of mutant and abnormal proteins as well as certain short-lived regulatory proteins. Required for cellular homeostasis and for survival from DNA damage and developmental changes induced by stress. Degrades polypeptides processively to yield small peptide fragments that are 5 to 10 amino acids long. Binds to DNA in a double-stranded, site-specific manner. This is Lon protease from Desulfovibrio desulfuricans (strain ATCC 27774 / DSM 6949 / MB).